Consider the following 268-residue polypeptide: Tryptophan synthase alpha chain (268 aa).

Active-site proton acceptor residues include Glu-49 and Asp-60.

The protein belongs to the TrpA family. As to quaternary structure, tetramer of two alpha and two beta chains.

The enzyme catalyses (1S,2R)-1-C-(indol-3-yl)glycerol 3-phosphate + L-serine = D-glyceraldehyde 3-phosphate + L-tryptophan + H2O. It participates in amino-acid biosynthesis; L-tryptophan biosynthesis; L-tryptophan from chorismate: step 5/5. In terms of biological role, the alpha subunit is responsible for the aldol cleavage of indoleglycerol phosphate to indole and glyceraldehyde 3-phosphate. This is Tryptophan synthase alpha chain from Haemophilus influenzae (strain 86-028NP).